A 344-amino-acid chain; its full sequence is Beta-1,4-galactosyltransferase 4 (344 aa).

The Cytoplasmic segment spans residues Met1–Arg12. A helical; Signal-anchor for type II membrane protein membrane pass occupies residues Leu13–Ile38. Topologically, residues Gln39–Ala344 are lumenal. Residues Cys77 and Cys118 are joined by a disulfide bond. UDP-alpha-D-galactose-binding positions include Pro129–Arg133, Phe168–Arg170, and Val195–Asp196. The cysteines at positions 189 and 208 are disulfide-linked. Asp196 contributes to the Mn(2+) binding site. Residue Asn220 is glycosylated (N-linked (GlcNAc...) asparagine). Positions 224 and 256 each coordinate UDP-alpha-D-galactose. Gly258–Asp261 is a binding site for N-acetyl-D-glucosamine. Mn(2+) is bound at residue His289. Position 289–291 (His289–Arg291) interacts with UDP-alpha-D-galactose. Arg301 is an N-acetyl-D-glucosamine binding site. Asn335 carries an N-linked (GlcNAc...) asparagine glycan.

Belongs to the glycosyltransferase 7 family. Interacts with SLC35A2/UGT1. It depends on Mn(2+) as a cofactor.

Its subcellular location is the golgi apparatus membrane. It localises to the secreted. It carries out the reaction N-acetyl-D-glucosamine + UDP-alpha-D-galactose = beta-D-galactosyl-(1-&gt;4)-N-acetyl-D-glucosamine + UDP + H(+). The enzyme catalyses a beta-D-GlcNAc-(1-&gt;3)-beta-D-Gal-(1-&gt;4)-beta-D-Glc-(1&lt;-&gt;1)-Cer(d18:1(4E)) + UDP-alpha-D-galactose = a neolactoside nLc4Cer(d18:1(4E)) + UDP + H(+). The catalysed reaction is 3-O-{beta-D-galactosyl-(1-&gt;3)-[6-O-sulfo-N-acetyl-beta-D-glucosaminyl-(1-&gt;6)]-N-acetyl-alpha-D-galactosaminyl}-L-seryl-[protein] + UDP-alpha-D-galactose = 3-O-{beta-D-galactosyl-(1-&gt;3)-[beta-D-galactosyl-(1-&gt;4)-6-O-sulfo-N-acetyl-beta-D-glucosaminyl-(1-&gt;6)]-N-acetyl-alpha-D-galactosaminyl}-L-seryl-[protein] + UDP + H(+). It catalyses the reaction 3-O-{beta-D-galactosyl-(1-&gt;3)-[6-O-sulfo-N-acetyl-beta-D-glucosaminyl-(1-&gt;6)]-N-acetyl-alpha-D-galactosaminyl}-L-threonyl-[protein] + UDP-alpha-D-galactose = 3-O-{beta-D-galactosyl-(1-&gt;3)-[beta-D-galactosyl-(1-&gt;4)-6-O-sulfo-N-acetyl-beta-D-glucosaminyl-(1-&gt;6)]-N-acetyl-alpha-D-galactosaminyl}-L-threonyl-[protein] + UDP + H(+). Its pathway is protein modification; protein glycosylation. It participates in glycolipid biosynthesis. Functionally, galactose (Gal) transferase involved in the synthesis of terminal N-acetyllactosamine (LacNac) unit present on glycan chains of glycoproteins and glycosphingolipids. Catalyzes the transfer of Gal residue via a beta1-&gt;4 linkage from UDP-Gal to the non-reducing terminal N-acetyl glucosamine 6-O-sulfate (6-O-sulfoGlcNAc) in the linearly growing chain of both N- and O-linked keratan sulfate proteoglycans. Cooperates with B3GNT7 N-acetyl glucosamine transferase and CHST6 and CHST1 sulfotransferases to construct and elongate mono- and disulfated disaccharide units [-&gt;3Galbeta1-&gt;4(6-sulfoGlcNAcbeta)1-&gt;] and [-&gt;3(6-sulfoGalbeta)1-&gt;4(6-sulfoGlcNAcbeta)1-&gt;] within keratan sulfate polymer. Transfers Gal residue via a beta1-&gt;4 linkage to terminal 6-O-sulfoGlcNAc within the LacNac unit of core 2 O-glycans forming 6-sulfo-sialyl-Lewis X (sLex). May contribute to the generation of sLex epitope on mucin-type glycoproteins that serve as ligands for SELL/L-selectin, a major regulator of leukocyte migration. In the biosynthesis pathway of neolacto-series glycosphingolipids, transfers Gal residue via a beta1-&gt;4 linkage to terminal GlcNAc of a lactotriaosylceramide (Lc3Cer) acceptor to form a neolactotetraosylceramide. This chain is Beta-1,4-galactosyltransferase 4 (B4galt4), found in Rattus norvegicus (Rat).